The sequence spans 882 residues: Holliday junction resolvase MOC1, chloroplastic (882 aa).

Disordered stretches follow at residues isoleucine 87–threonine 148 and threonine 323–alanine 351. Over residues proline 91–glycine 111 the composition is skewed to polar residues. The segment covering proline 112 to proline 125 has biased composition (low complexity). Positions asparagine 134 to threonine 148 are enriched in polar residues. Residues threonine 323–serine 337 show a composition bias toward low complexity. Positions 397, 552, 629, and 634 each coordinate Mg(2+). A disordered region spans residues lysine 710–glutamate 882. Positions glutamate 732–alanine 743 are enriched in acidic residues. 4 stretches are compositionally biased toward low complexity: residues glutamate 744 to alanine 758, valine 769 to glycine 783, serine 810 to alanine 819, and alanine 830 to serine 844. Gly residues-rich tracts occupy residues serine 845–lysine 857 and alanine 868–glutamate 882.

Mg(2+) serves as cofactor. Requires Mn(2+) as cofactor.

It localises to the plastid. It is found in the chloroplast. The catalysed reaction is Endonucleolytic cleavage at a junction such as a reciprocal single-stranded crossover between two homologous DNA duplexes (Holliday junction).. Functionally, a structure-specific endonuclease that resolves Holliday junction (HJ) intermediates during genetic recombination. Cleaves 4-way DNA junctions introducing paired nicks in opposing strands, leaving a 5'-terminal phosphate and a 3'-terminal hydroxyl group that are ligated to produce recombinant products. Mediates chloroplast nucleoid segregation during chloroplast division. This is Holliday junction resolvase MOC1, chloroplastic from Chlamydomonas reinhardtii (Chlamydomonas smithii).